Here is a 253-residue protein sequence, read N- to C-terminus: 3-dehydroquinate dehydratase (253 aa).

3-dehydroquinate contacts are provided by residues 46-48 (EWR) and Arg-82. His-143 serves as the catalytic Proton donor/acceptor. Lys-170 functions as the Schiff-base intermediate with substrate in the catalytic mechanism. Positions 213, 232, and 236 each coordinate 3-dehydroquinate.

Belongs to the type-I 3-dehydroquinase family. Homodimer.

The enzyme catalyses 3-dehydroquinate = 3-dehydroshikimate + H2O. The protein operates within metabolic intermediate biosynthesis; chorismate biosynthesis; chorismate from D-erythrose 4-phosphate and phosphoenolpyruvate: step 3/7. Functionally, involved in the third step of the chorismate pathway, which leads to the biosynthesis of aromatic amino acids. Catalyzes the cis-dehydration of 3-dehydroquinate (DHQ) and introduces the first double bond of the aromatic ring to yield 3-dehydroshikimate. The chain is 3-dehydroquinate dehydratase from Syntrophotalea carbinolica (strain DSM 2380 / NBRC 103641 / GraBd1) (Pelobacter carbinolicus).